Reading from the N-terminus, the 271-residue chain is Transmembrane protein 150A (271 aa).

Topologically, residues 1–2 (MT) are cytoplasmic. Residues 3–23 (AWILLPVSLSAFSITGIWTVY) form a helical membrane-spanning segment. Residues 24 to 75 (AMAVMNRHVCPVENWSYNESCSPDPAEQGGPKSCCTLDDVPLISKCGTYPPE) lie on the Extracellular side of the membrane. Asn37 and Asn41 each carry an N-linked (GlcNAc...) asparagine glycan. A helical transmembrane segment spans residues 76–96 (SCLFSLIGNMGAVMVALICLL). The Cytoplasmic segment spans residues 97–108 (RYGQLLEQSRHS). Residues 109 to 129 (WINTTALITGCTNAAGLVVVG) form a helical membrane-spanning segment. Residues 130-140 (NFQVDHAKSLH) are Extracellular-facing. Residues 141-161 (YIGTGVAFTAGLLFVCLHCVL) traverse the membrane as a helical segment. The Cytoplasmic segment spans residues 162–178 (FYHGATTPLDMAMAYLR). A helical membrane pass occupies residues 179-199 (SVLAVIAFITLVLSGVFFLHE). Topologically, residues 200 to 211 (SSQLQHGAALCE) are extracellular. The helical transmembrane segment at 212–232 (WVFVLDILIFYGTFSYEFGTI) threads the bilayer. At 233 to 271 (SSDTLVAALQPAPGRACKSSGSSSTSTHLNCAPESIAMI) the chain is on the cytoplasmic side.

It belongs to the DRAM/TMEM150 family. Interacts (via C-terminal cytoplasmic tail) with PI4KA.

It is found in the cell membrane. Functionally, regulates localization of phosphatidylinositol 4-kinase (PI4K) to the plasma membrane, possibly by reducing the association of TTC7 (TTC7A or TTC7B) with the PI4K complex. Acts as a regulator of phosphatidylinositol 4-phosphate (PtdIns(4)P) synthesis. May also play a role in fasting-induced catabolism. The polypeptide is Transmembrane protein 150A (Tmem150a) (Mus musculus (Mouse)).